The primary structure comprises 83 residues: Glutaredoxin 3 (83 aa).

In terms of domain architecture, Glutaredoxin spans 2–83; that stretch reads ANVEIYTKET…ARGGLDPLLK (82 aa). An intrachain disulfide couples Cys12 to Cys15.

It belongs to the glutaredoxin family. Monomer.

The disulfide bond functions as an electron carrier in the glutathione-dependent synthesis of deoxyribonucleotides by the enzyme ribonucleotide reductase. In addition, it is also involved in reducing some disulfides in a coupled system with glutathione reductase. This is Glutaredoxin 3 (grxC) from Escherichia coli O157:H7.